Here is a 509-residue protein sequence, read N- to C-terminus: Sulfoacetate--CoA ligase (509 aa).

Residues 320–340 (AFSNPLDPGQRRIGSIGRPSG) form a disordered region.

The protein belongs to the ATP-dependent AMP-binding enzyme family.

It localises to the cytoplasm. It catalyses the reaction sulfoacetate + ATP + CoA = sulfoacetyl-CoA + AMP + diphosphate. In terms of biological role, involved in the degradation of sulfoacetate, a widespread natural product. Catalyzes the CoA- and ATP-dependent conversion of sulfoacetate to sulfoacetyl-CoA and AMP. This is Sulfoacetate--CoA ligase from Cupriavidus necator (strain ATCC 17699 / DSM 428 / KCTC 22496 / NCIMB 10442 / H16 / Stanier 337) (Ralstonia eutropha).